Reading from the N-terminus, the 212-residue chain is Small ribosomal subunit protein uS2 (212 aa).

Positions 190 to 212 are disordered; it reads LSPDAPEDQPAPVSEFETKVKMV.

This sequence belongs to the universal ribosomal protein uS2 family.

The protein is Small ribosomal subunit protein uS2 of Ignicoccus hospitalis (strain KIN4/I / DSM 18386 / JCM 14125).